A 109-amino-acid chain; its full sequence is uncharacterized protein (109 aa).

It belongs to the archaeal ATPase family.

This is an uncharacterized protein from Methanocaldococcus jannaschii (strain ATCC 43067 / DSM 2661 / JAL-1 / JCM 10045 / NBRC 100440) (Methanococcus jannaschii).